We begin with the raw amino-acid sequence, 179 residues long: Translationally-controlled tumor protein homolog (179 aa).

The TCTP domain occupies 1 to 179; the sequence is MIIYKDIISG…WKHGLEEMKV (179 aa).

It belongs to the TCTP family.

Its subcellular location is the cytoplasm. The protein localises to the cytoskeleton. Involved in protein synthesis. Involved in microtubule stabilization. Involved in osmoadaptation. The chain is Translationally-controlled tumor protein homolog from Emericella nidulans (strain FGSC A4 / ATCC 38163 / CBS 112.46 / NRRL 194 / M139) (Aspergillus nidulans).